The sequence spans 548 residues: Chaperonin GroEL (548 aa).

Residues 30–33, Lys-51, 87–91, Gly-415, 479–481, and Asp-495 each bind ATP; these read TLGP, DGTTT, and NAA.

The protein belongs to the chaperonin (HSP60) family. Forms a cylinder of 14 subunits composed of two heptameric rings stacked back-to-back. Interacts with the co-chaperonin GroES.

The protein localises to the cytoplasm. It catalyses the reaction ATP + H2O + a folded polypeptide = ADP + phosphate + an unfolded polypeptide.. Together with its co-chaperonin GroES, plays an essential role in assisting protein folding. The GroEL-GroES system forms a nano-cage that allows encapsulation of the non-native substrate proteins and provides a physical environment optimized to promote and accelerate protein folding. The polypeptide is Chaperonin GroEL (Klebsiella pneumoniae (strain 342)).